Reading from the N-terminus, the 785-residue chain is Arrestin domain-containing protein D (785 aa).

Disordered regions lie at residues 29-69, 172-205, 326-367, 435-486, and 608-642; these read QNES…SKYP, ILLPTTTSTQNSTLSPTLLSSNLNSKSSTTTTTT, SNNS…ITNN, SNSN…SDHN, and YSSSGSGSGSGSSNSNSNHSSSNYLNEQEENLDEQ. Residues 173–205 are compositionally biased toward low complexity; that stretch reads LLPTTTSTQNSTLSPTLLSSNLNSKSSTTTTTT. Low complexity predominate over residues 435–450; sequence SNSNSSSSGGSSNKNN. Basic residues predominate over residues 466–478; it reads SNKKSSGSHRYHY. A compositionally biased stretch (low complexity) spans 608–633; that stretch reads YSSSGSGSGSGSSNSNSNHSSSNYLN. The FYVE-type zinc finger occupies 682-742; that stretch reads ESSITNCNLC…ICLMCFDAVK (61 aa). Residues cysteine 688, cysteine 691, cysteine 704, cysteine 707, cysteine 712, cysteine 715, cysteine 734, and cysteine 737 each coordinate Zn(2+). The RING-type; degenerate zinc-finger motif lies at 688-738; sequence CNLCDNTFTIIRRTHHCRACGGVFCEACSNQKVCLYGFGVNNKVRICLMCF.

The protein belongs to the arrestin family.

The sequence is that of Arrestin domain-containing protein D (adcD) from Dictyostelium discoideum (Social amoeba).